The chain runs to 337 residues: UDP-N-acetylenolpyruvoylglucosamine reductase (337 aa).

Positions 17–186 (IEAKAKQFIA…TSVIYKLTKR (170 aa)) constitute an FAD-binding PCMH-type domain. R162 is a catalytic residue. The active-site Proton donor is the S237. The active site involves E333.

Belongs to the MurB family. It depends on FAD as a cofactor.

The protein localises to the cytoplasm. It catalyses the reaction UDP-N-acetyl-alpha-D-muramate + NADP(+) = UDP-N-acetyl-3-O-(1-carboxyvinyl)-alpha-D-glucosamine + NADPH + H(+). Its pathway is cell wall biogenesis; peptidoglycan biosynthesis. In terms of biological role, cell wall formation. This Flavobacterium johnsoniae (strain ATCC 17061 / DSM 2064 / JCM 8514 / BCRC 14874 / CCUG 350202 / NBRC 14942 / NCIMB 11054 / UW101) (Cytophaga johnsonae) protein is UDP-N-acetylenolpyruvoylglucosamine reductase.